The chain runs to 319 residues: ATP-dependent 6-phosphofructokinase (319 aa).

Gly-11 contributes to the ATP binding site. 21–25 (RAVVR) is a binding site for ADP. ATP contacts are provided by residues 72 to 73 (RC) and 102 to 105 (GDGS). Position 103 (Asp-103) interacts with Mg(2+). Residue 125-127 (TID) participates in substrate binding. The active-site Proton acceptor is Asp-127. ADP is bound at residue Arg-154. Substrate-binding positions include Arg-162 and 169–171 (MGR). ADP-binding positions include 185–187 (GAE), Lys-211, and 213–215 (KMH). Substrate is bound by residues Glu-222, Arg-243, and 249–252 (HIQR).

Belongs to the phosphofructokinase type A (PFKA) family. ATP-dependent PFK group I subfamily. Prokaryotic clade 'B1' sub-subfamily. Homotetramer. Mg(2+) serves as cofactor.

It is found in the cytoplasm. It catalyses the reaction beta-D-fructose 6-phosphate + ATP = beta-D-fructose 1,6-bisphosphate + ADP + H(+). It functions in the pathway carbohydrate degradation; glycolysis; D-glyceraldehyde 3-phosphate and glycerone phosphate from D-glucose: step 3/4. Its activity is regulated as follows. Allosterically activated by ADP and other diphosphonucleosides, and allosterically inhibited by phosphoenolpyruvate. In terms of biological role, catalyzes the phosphorylation of D-fructose 6-phosphate to fructose 1,6-bisphosphate by ATP, the first committing step of glycolysis. This Clostridium botulinum (strain 657 / Type Ba4) protein is ATP-dependent 6-phosphofructokinase.